A 225-amino-acid chain; its full sequence is NAD(P)H-quinone oxidoreductase subunit K, chloroplastic (225 aa).

Residues C43, C44, C108, and C139 each coordinate [4Fe-4S] cluster.

It belongs to the complex I 20 kDa subunit family. As to quaternary structure, NDH is composed of at least 16 different subunits, 5 of which are encoded in the nucleus. [4Fe-4S] cluster serves as cofactor.

Its subcellular location is the plastid. The protein localises to the chloroplast thylakoid membrane. It catalyses the reaction a plastoquinone + NADH + (n+1) H(+)(in) = a plastoquinol + NAD(+) + n H(+)(out). The catalysed reaction is a plastoquinone + NADPH + (n+1) H(+)(in) = a plastoquinol + NADP(+) + n H(+)(out). In terms of biological role, NDH shuttles electrons from NAD(P)H:plastoquinone, via FMN and iron-sulfur (Fe-S) centers, to quinones in the photosynthetic chain and possibly in a chloroplast respiratory chain. The immediate electron acceptor for the enzyme in this species is believed to be plastoquinone. Couples the redox reaction to proton translocation, and thus conserves the redox energy in a proton gradient. This Oryza nivara (Indian wild rice) protein is NAD(P)H-quinone oxidoreductase subunit K, chloroplastic.